The following is a 314-amino-acid chain: Regulator of microtubule dynamics protein 1 (314 aa).

K165 carries the N6-succinyllysine modification. TPR repeat units lie at residues 168 to 204 and 222 to 258; these read AICL…NPKD and PWYQ…DPNF.

It belongs to the RMDN family. Interacts with microtubules.

It is found in the cytoplasm. Its subcellular location is the cytoskeleton. It localises to the spindle. The protein resides in the spindle pole. In Pongo abelii (Sumatran orangutan), this protein is Regulator of microtubule dynamics protein 1 (RMDN1).